Consider the following 883-residue polypeptide: Coatomer subunit gamma (883 aa).

The tract at residues 1–25 (MNYFSLTSHKKHRGHPSAGPSNAYQ) is disordered. 6 HEAT repeats span residues 69–106 (REATDCFFAMTKLFQSKDVVLRRMVYLGIKELSSIAED), 292–329 (RMLSPAFSILQLFCSSPKATLRFAAVRTLNKVAMTHPA), 331–364 (VTTCNLDLEGLITDSNRSVATLAITTLLKTGAES), 365–401 (SVERLMKQISTFVAEISDEFKVVVVQAICALCTKYPR), 404–439 (TVLMNFLSGMLREEGGLEYKTSIVDTIITIIEENAD), and 476–513 (ATPSKYIRFIYNRVILESPIVRAAAVTAMAQFGASCPA).

This sequence belongs to the COPG family. As to quaternary structure, oligomeric complex that consists of at least the alpha, beta, beta', gamma, delta, epsilon and zeta subunits. In terms of tissue distribution, expressed in ovary, testis, testis tip, young spermatocytes, germ cells and follicle cells. Up-regulated expression within centrally to posteriorly located germarial cysts and in migrating follicle cells. Widespread expression in imaginal disks including eye-antennal disk, wing disk, third leg and haltere disk.

The protein localises to the cytoplasm. Its subcellular location is the golgi apparatus membrane. It is found in the cytoplasmic vesicle. The protein resides in the COPI-coated vesicle membrane. It localises to the endoplasmic reticulum. Its function is as follows. The coatomer is a cytosolic protein complex that binds to dilysine motifs and reversibly associates with Golgi non-clathrin-coated vesicles, which further mediate biosynthetic protein transport from the ER, via the Golgi up to the trans Golgi network. Coatomer complex is required for budding from Golgi membranes, and is essential for the retrograde Golgi-to-ER transport of dilysine-tagged proteins. Required for limiting lipid storage in lipid droplets. Involved in the expansion of luminal extracellular matrices and apical membrane during tubulogenesis. Required in the tracheal epithelium for luminal protein secretion and diametric tube growth. In salivary glands, required for deposition of O-glycans and luminal extracellular matrix assembly. Required for epidermal morphogenesis and cuticle development. The chain is Coatomer subunit gamma from Drosophila melanogaster (Fruit fly).